The chain runs to 239 residues: MGWQRPDGRQSHQLRPISFERGFTRFAAGSVLTRCGQTQVLCNVTVRPGVPKFLEGRGQGWLTAEYRMLPAATPQRQEREMLKLSGRTQEIQRLIGRSLRAALDFDLLGERTLVVDADVLQADAGTRTTAITGSFVALADAIDQLLQAGELQRSPIRNYVAAVSVGLLEGEPFLDLSYQEDVAASVDFNVVMTESLQILELQGTAEGESFSRTQLNQILDVAEVGIRELIAAQKSVLGQ.

Residues Arg87 and 125 to 127 (GTR) contribute to the phosphate site.

This sequence belongs to the RNase PH family. Homohexameric ring arranged as a trimer of dimers.

The catalysed reaction is tRNA(n+1) + phosphate = tRNA(n) + a ribonucleoside 5'-diphosphate. Phosphorolytic 3'-5' exoribonuclease that plays an important role in tRNA 3'-end maturation. Removes nucleotide residues following the 3'-CCA terminus of tRNAs; can also add nucleotides to the ends of RNA molecules by using nucleoside diphosphates as substrates, but this may not be physiologically important. Probably plays a role in initiation of 16S rRNA degradation (leading to ribosome degradation) during starvation. This chain is Ribonuclease PH, found in Cyanothece sp. (strain PCC 7425 / ATCC 29141).